Reading from the N-terminus, the 157-residue chain is Protein Smg homolog (157 aa).

It belongs to the Smg family.

The chain is Protein Smg homolog from Shewanella woodyi (strain ATCC 51908 / MS32).